The chain runs to 271 residues: 3-methyl-2-oxobutanoate hydroxymethyltransferase 2 (271 aa).

Asp-53 and Asp-92 together coordinate Mg(2+). 3-methyl-2-oxobutanoate-binding positions include 53–54 (DS), Asp-92, and Lys-120. Glu-122 is a Mg(2+) binding site. The active-site Proton acceptor is Glu-189.

Belongs to the PanB family. As to quaternary structure, homodecamer; pentamer of dimers. Mg(2+) serves as cofactor.

It is found in the cytoplasm. It carries out the reaction 3-methyl-2-oxobutanoate + (6R)-5,10-methylene-5,6,7,8-tetrahydrofolate + H2O = 2-dehydropantoate + (6S)-5,6,7,8-tetrahydrofolate. It functions in the pathway cofactor biosynthesis; (R)-pantothenate biosynthesis; (R)-pantoate from 3-methyl-2-oxobutanoate: step 1/2. In terms of biological role, catalyzes the reversible reaction in which hydroxymethyl group from 5,10-methylenetetrahydrofolate is transferred onto alpha-ketoisovalerate to form ketopantoate. In Burkholderia lata (strain ATCC 17760 / DSM 23089 / LMG 22485 / NCIMB 9086 / R18194 / 383), this protein is 3-methyl-2-oxobutanoate hydroxymethyltransferase 2.